The sequence spans 63 residues: Large ribosomal subunit protein uL29 (63 aa).

The protein belongs to the universal ribosomal protein uL29 family.

This is Large ribosomal subunit protein uL29 from Sodalis glossinidius (strain morsitans).